Consider the following 201-residue polypeptide: MTEVEPKSVLYCGVCSFPPEFCEFGGSFKRCKEWLEQNDKELYEKLYSEDALANATSTLSIDKEQKIAKELEKKQAKEEAKQERELKKQLASKVTIKRIERNKRKHVIAISGLEVFDIDMKKLSKTFASKFATGASVTKNAEKKDEIIVQGDVSDEARAYIEKLLEEKGLNEVKVEQIDDKKKKKAAEAAEAAAAATGNKK.

The SUI1 domain maps to 94-165 (VTIKRIERNK…EARAYIEKLL (72 aa)).

The protein belongs to the DENR family. As to quaternary structure, interacts with the 40S ribosomal subunit.

Its subcellular location is the cytoplasm. The sequence is that of Translation machinery-associated protein 22 (TMA22) from Meyerozyma guilliermondii (strain ATCC 6260 / CBS 566 / DSM 6381 / JCM 1539 / NBRC 10279 / NRRL Y-324) (Yeast).